The following is a 309-amino-acid chain: Elongation factor Ts, mitochondrial (309 aa).

It belongs to the EF-Ts family.

Its subcellular location is the mitochondrion. Functionally, associates with the EF-Tu.GDP complex and induces the exchange of GDP to GTP. It remains bound to the aminoacyl-tRNA.EF-Tu.GTP complex up to the GTP hydrolysis stage on the ribosome. The polypeptide is Elongation factor Ts, mitochondrial (tsfm) (Salmo salar (Atlantic salmon)).